Reading from the N-terminus, the 305-residue chain is Taste receptor type 2 member 13 (305 aa).

Over 1–7 the chain is Extracellular; it reads MGSSLYD. The chain crosses the membrane as a helical span at residues 8-28; the sequence is ILTIVMIAEFIFGNVTNGFIV. At 29 to 42 the chain is on the cytoplasmic side; that stretch reads LTNCIAWLSKRTLS. Residues 43 to 63 form a helical membrane-spanning segment; sequence FIGWIQLFLAISRVVLIWEML. Over 64 to 88 the chain is Extracellular; that stretch reads LAWLKYMKYSFSYLAGTELRVMMLT. The chain crosses the membrane as a helical span at residues 89-109; the sequence is WVVSNHFSLWLATILSIFYLL. Over 110–128 the chain is Cytoplasmic; the sequence is KIASFSRPVFLYLKWRVKK. The helical transmembrane segment at 129–149 threads the bilayer; it reads VLLLILLGNLIFLMFNILQIN. The Extracellular segment spans residues 150 to 182; the sequence is THIEDWMDQYKRNITWDSRVNEFVGFSNLVLLE. Asparagine 162 is a glycosylation site (N-linked (GlcNAc...) asparagine). A helical transmembrane segment spans residues 183-203; that stretch reads MIMFSVTPFTVALVSFILLIF. Over 204–232 the chain is Cytoplasmic; it reads SLWKHLQKMHLSSRGERDPSTKAHVNALR. A helical membrane pass occupies residues 233–253; that stretch reads IMVSFLLLYATYFISFFISLI. Topologically, residues 254-262 are extracellular; the sequence is PMAHKKGLD. Residues 263–283 form a helical membrane-spanning segment; that stretch reads LMFSLTVGLFYPSSHSFILIL. Residues 284–305 are Cytoplasmic-facing; that stretch reads GHSNLRHSSCLVITYLRCKEKD.

This sequence belongs to the G-protein coupled receptor T2R family. As to expression, expressed in subsets of taste receptor cells of the tongue and palate epithelium and exclusively in gustducin-positive cells. Expressed in 15% taste bud cells in circumvallate and foliate papillae but only in 2% in fungiform papillae. Expressed in the duodenum, antrum and fundus (part of the stomach).

Its subcellular location is the membrane. Functionally, receptor that may play a role in the perception of bitterness and is gustducin-linked. May play a role in sensing the chemical composition of the gastrointestinal content. The activity of this receptor may stimulate alpha gustducin, mediate PLC-beta-2 activation and lead to the gating of TRPM5. The protein is Taste receptor type 2 member 13 (Tas2r13) of Rattus norvegicus (Rat).